The sequence spans 284 residues: Avenin-like b9 (284 aa).

Residues 1–18 form the signal peptide; sequence MKVFILALLALAATTAIA.

Belongs to the prolamin family. In terms of processing, contains disulfide bonds.

Seed storage protein. Might be integrated via inter-chain disulfide bonds within the glutenin polymer. This chain is Avenin-like b9, found in Triticum aestivum (Wheat).